Consider the following 239-residue polypeptide: 2,3,4,5-tetrahydropyridine-2,6-dicarboxylate N-acetyltransferase (239 aa).

This sequence belongs to the transferase hexapeptide repeat family. DapH subfamily.

The enzyme catalyses (S)-2,3,4,5-tetrahydrodipicolinate + acetyl-CoA + H2O = L-2-acetamido-6-oxoheptanedioate + CoA. The protein operates within amino-acid biosynthesis; L-lysine biosynthesis via DAP pathway; LL-2,6-diaminopimelate from (S)-tetrahydrodipicolinate (acetylase route): step 1/3. Functionally, catalyzes the transfer of an acetyl group from acetyl-CoA to tetrahydrodipicolinate. The protein is 2,3,4,5-tetrahydropyridine-2,6-dicarboxylate N-acetyltransferase of Staphylococcus saprophyticus subsp. saprophyticus (strain ATCC 15305 / DSM 20229 / NCIMB 8711 / NCTC 7292 / S-41).